The following is a 509-amino-acid chain: tRNA-2-methylthio-N(6)-dimethylallyladenosine synthase (509 aa).

The segment covering 1–15 has biased composition (polar residues); sequence MNEQQRLASQQANAS. Residues 1–22 are disordered; it reads MNEQQRLASQQANASTKKEEKD. An MTTase N-terminal domain is found at 66–184; the sequence is RKFYIRTYGC…LPYILKDAMF (119 aa). [4Fe-4S] cluster-binding residues include cysteine 75, cysteine 111, cysteine 145, cysteine 221, cysteine 225, and cysteine 228. In terms of domain architecture, Radical SAM core spans 207–437; sequence RRGDIKAWVN…NELVNEFSAK (231 aa). The TRAM domain occupies 440–503; that stretch reads KKYEGQIVEV…TWSLNGELVE (64 aa).

It belongs to the methylthiotransferase family. MiaB subfamily. In terms of assembly, monomer. It depends on [4Fe-4S] cluster as a cofactor.

It is found in the cytoplasm. The catalysed reaction is N(6)-dimethylallyladenosine(37) in tRNA + (sulfur carrier)-SH + AH2 + 2 S-adenosyl-L-methionine = 2-methylsulfanyl-N(6)-dimethylallyladenosine(37) in tRNA + (sulfur carrier)-H + 5'-deoxyadenosine + L-methionine + A + S-adenosyl-L-homocysteine + 2 H(+). In terms of biological role, catalyzes the methylthiolation of N6-(dimethylallyl)adenosine (i(6)A), leading to the formation of 2-methylthio-N6-(dimethylallyl)adenosine (ms(2)i(6)A) at position 37 in tRNAs that read codons beginning with uridine. This Bacillus cytotoxicus (strain DSM 22905 / CIP 110041 / 391-98 / NVH 391-98) protein is tRNA-2-methylthio-N(6)-dimethylallyladenosine synthase.